Reading from the N-terminus, the 646-residue chain is Epithelial sodium channel subunit beta-2 (646 aa).

The Cytoplasmic segment spans residues 1–57 (MIQGKLKRLKRYFTRALHRIQKGPGYTYKELLVWFCDNTNTHGPKRIIKEGPKKRVM). Residues 58-78 (WFILTLVFAGLVFWQWGLLIL) form a helical membrane-spanning segment. Residues 79–551 (TYLSYGVSVS…GGQFGFWMGG (473 aa)) are Extracellular-facing. 8 disulfides stabilise this stretch: C104–C290, C214–C221, C267–C274, C380–C467, C405–C463, C409–C459, C418–C445, and C420–C434. The helical transmembrane segment at 552-572 (SVLCIIEFGEIIIDCMWITIL) threads the bilayer. Residues 573–646 (KLLAWIRNRR…IEPVSSDEEN (74 aa)) lie on the Cytoplasmic side of the membrane. Residues 586–646 (QRPQYADPPP…IEPVSSDEEN (61 aa)) form a disordered region. A compositionally biased stretch (basic and acidic residues) spans 610 to 619 (QHDDGNHVTE).

Belongs to the amiloride-sensitive sodium channel (TC 1.A.6) family. SCNN1B subfamily. As to quaternary structure, component of the heterotrimeric epithelial sodium channel (ENaC) composed of an alpha/SCNN1A, a beta/SCNN1B and a gamma/SCNN1G subunit.

The protein resides in the apical cell membrane. Its subcellular location is the cytoplasmic vesicle membrane. The catalysed reaction is Na(+)(in) = Na(+)(out). With respect to regulation, originally identified and characterized by its inhibition by the diuretic drug amiloride. Its function is as follows. This is one of the three pore-forming subunits of the heterotrimeric epithelial sodium channel (ENaC), a critical regulator of sodium balance and fluid homeostasis. ENaC operates in epithelial tissues, where it mediates the electrodiffusion of sodium ions from extracellular fluid through the apical membrane of cells, with water following osmotically. The polypeptide is Epithelial sodium channel subunit beta-2 (scnn1b-b) (Xenopus laevis (African clawed frog)).